Here is a 366-residue protein sequence, read N- to C-terminus: Isocitrate dehydrogenase [NAD] subunit alpha, mitochondrial (366 aa).

Residues 1–27 (MAGSAWVSKVSRLLGAFHNTKQVTRGF) constitute a mitochondrion transit peptide. At Lys77 the chain carries N6-succinyllysine. Phosphothreonine is present on Thr101. Residues Arg115, Arg125, and Arg146 each contribute to the substrate site. Lys223 is modified (N6-acetyllysine). Residues Asp233, Asp257, and Asp261 each coordinate Mg(2+). Lys343 carries the post-translational modification N6-acetyllysine; alternate. Residue Lys343 is modified to N6-succinyllysine; alternate. Position 350 is an N6-succinyllysine (Lys350).

Belongs to the isocitrate and isopropylmalate dehydrogenases family. As to quaternary structure, heterooligomer of subunits alpha (IDH3A), beta (IDH3B), and gamma (IDH3G) in the apparent ratio of 2:1:1. The heterodimer containing one IDH3A and one IDH3B subunit and the heterodimer containing one IDH3A and one IDH3G subunit assemble into a heterotetramer (which contains two subunits of IDH3A, one of IDH3B and one of IDH3G) and further into the heterooctamer. It depends on Mg(2+) as a cofactor. Mn(2+) serves as cofactor. In terms of tissue distribution, expressed in brown adipose tissue (BAT).

It is found in the mitochondrion. It catalyses the reaction D-threo-isocitrate + NAD(+) = 2-oxoglutarate + CO2 + NADH. With respect to regulation, the heterotetramer and the heterodimer composed of IDH3A and IDH3G subunits can be allosterically activated by citrate (CIT) or/and ADP, and the two activators can act independently or synergistically. The heterodimer composed of IDH3A and IDH3B subunits cannot be allosterically regulated and the allosteric regulation of the heterotetramer is through the IDH3G subunit and not the IDH3B subunit. The IDH3G subunit contains the allosteric site which consists of a CIT-binding site and an ADP-binding site, and the binding of CIT and ADP causes conformational changes at the allosteric site which are transmitted to the active site in the catalytic subunit (IDH3A) through a cascade of conformational changes at the heterodimer interface, leading to stabilization of the isocitrate-binding at the active site and thus activation of the enzyme. ATP can activate the heterotetramer and the heterodimer composed of IDH3A and IDH3G subunits at low concentrations but inhibits their activities at high concentrations, whereas ATP exhibits only inhibitory effect on the heterodimer composed of IDH3A and IDH3B subunits. Its function is as follows. Catalytic subunit of the enzyme which catalyzes the decarboxylation of isocitrate (ICT) into alpha-ketoglutarate. The heterodimer composed of the alpha (IDH3A) and beta (IDH3B) subunits and the heterodimer composed of the alpha (IDH3A) and gamma (IDH3G) subunits, have considerable basal activity but the full activity of the heterotetramer (containing two subunits of IDH3A, one of IDH3B and one of IDH3G) requires the assembly and cooperative function of both heterodimers. The protein is Isocitrate dehydrogenase [NAD] subunit alpha, mitochondrial of Rattus norvegicus (Rat).